A 261-amino-acid chain; its full sequence is Bidirectional sugar transporter SWEET1b (261 aa).

Topologically, residues 1–6 (MEDLAK) are extracellular. The helical transmembrane segment at 7–27 (FLFGVSGNVIALFLFLSPVPT) threads the bilayer. Residues 7-95 (FLFGVSGNVI…VVFLVFASTH (89 aa)) enclose the MtN3/slv 1 domain. Residues 28–42 (FWRIIRRKSTEDFSG) are Cytoplasmic-facing. The helical transmembrane segment at 43-63 (VPYNMTLINCLLSAWYGLPFV) threads the bilayer. The Extracellular portion of the chain corresponds to 64–71 (SPNNILVS). A helical transmembrane segment spans residues 72 to 92 (TINGAGAVIETAYVVVFLVFA). Over 93-101 (STHKTRLRT) the chain is Cytoplasmic. Residues 102-122 (LGLAAAVASVFAAVALVSLLA) traverse the membrane as a helical segment. Residues 123–129 (LHGQHRK) are Extracellular-facing. Residues 130–150 (LLCGVAATVCSICMYASPLSI) form a helical membrane-spanning segment. The 83-residue stretch at 133–215 (GVAATVCSIC…VLYAIYRNNK (83 aa)) folds into the MtN3/slv 2 domain. At 151 to 164 (MRLVIKTKSVEYMP) the chain is on the cytoplasmic side. Residues 165-185 (FLMSLAVFLCGTSWFIYGLLG) form a helical membrane-spanning segment. Topologically, residues 186 to 189 (RDPF) are extracellular. The chain crosses the membrane as a helical span at residues 190-210 (VTIPNGCGSFLGAVQLVLYAI). Residues 211-261 (YRNNKGAGGGSGGKQAGDDDVEMAEGRNNKVADGGAADDDSTAGGKAGTEV) are Cytoplasmic-facing. The segment at 218-261 (GGGSGGKQAGDDDVEMAEGRNNKVADGGAADDDSTAGGKAGTEV) is disordered.

The protein belongs to the SWEET sugar transporter family. As to quaternary structure, forms homodimers. Highly expressed in leaves. Expressed at very low levels in roots, stems and panicles.

The protein localises to the cell membrane. The catalysed reaction is D-glucose(out) = D-glucose(in). It catalyses the reaction D-galactose(in) = D-galactose(out). In terms of biological role, mediates transport of sugars across the plasma membrane. Can transport glucose and galactose, but not fructose, mannose and sucrose. The protein is Bidirectional sugar transporter SWEET1b (SWEET1B) of Oryza sativa subsp. japonica (Rice).